The following is a 712-amino-acid chain: Polyribonucleotide nucleotidyltransferase (712 aa).

The Mg(2+) site is built by aspartate 487 and aspartate 493. In terms of domain architecture, KH spans 554 to 613 (PKIITMTINPDKIRDVIGPSGKQINKIIEETGVKIDIEQDGTVFISSINQEMNDKAKKII). An S1 motif domain is found at 623–691 (GEIYEGKVKR…KQGRVNLSRK (69 aa)).

It belongs to the polyribonucleotide nucleotidyltransferase family. Mg(2+) is required as a cofactor.

The protein localises to the cytoplasm. It catalyses the reaction RNA(n+1) + phosphate = RNA(n) + a ribonucleoside 5'-diphosphate. Its function is as follows. Involved in mRNA degradation. Catalyzes the phosphorolysis of single-stranded polyribonucleotides processively in the 3'- to 5'-direction. This chain is Polyribonucleotide nucleotidyltransferase, found in Bacillus anthracis (strain CDC 684 / NRRL 3495).